Here is a 140-residue protein sequence, read N- to C-terminus: MSFASEFKAFALKGNVVDLAVGVIIGAAFGKIVDSIVNDLVMPVVGAIFGGLDFKDYFVALKEIPPGVPHALDAVKKAGVPVFAYGSFLTIVLNFLILAFIIFLMVKQFNRMKRAEPAPAPAAPPEQVVLLREIRDALRR.

The next 2 helical transmembrane spans lie at 16–36 (VVDL…VDSI) and 86–106 (GSFL…FLMV).

Belongs to the MscL family. In terms of assembly, homopentamer.

The protein localises to the cell inner membrane. In terms of biological role, channel that opens in response to stretch forces in the membrane lipid bilayer. May participate in the regulation of osmotic pressure changes within the cell. The sequence is that of Large-conductance mechanosensitive channel from Anaeromyxobacter sp. (strain K).